Consider the following 225-residue polypeptide: PKHD-type hydroxylase YbiX (225 aa).

Positions 78–177 (TLSTPLFNRY…RVASFMWIQS (100 aa)) constitute a Fe2OG dioxygenase domain. 3 residues coordinate Fe cation: His-96, Asp-98, and His-158. Position 168 (Arg-168) interacts with 2-oxoglutarate.

Fe(2+) serves as cofactor. The cofactor is L-ascorbate.

The chain is PKHD-type hydroxylase YbiX from Escherichia coli O17:K52:H18 (strain UMN026 / ExPEC).